We begin with the raw amino-acid sequence, 485 residues long: uncharacterized protein (485 aa).

It is found in the virion. This is an uncharacterized protein from Acanthamoeba polyphaga mimivirus (APMV).